Reading from the N-terminus, the 226-residue chain is MKFFAYFAVIALSSASLINLFKRATANGCEVESCYKAHQTLINSCNGAFDFNCLCNLPQSYFQNLYDCSKSCDTLQESDIHSPSDIRSIYCEAASNSIYTFSIDSISLDMIGYSDFETDTEATTGSDTRTKAATGATTSAGTGVTKTSETGGVSSTANSEAKSGSVTTSKSGSTSISESKTTSGSSSSGKSSSSTSSASSQQTSSHAGGASGAFVSLLGLFAALLI.

The N-terminal stretch at 1–26 (MKFFAYFAVIALSSASLINLFKRATA) is a signal peptide. The tract at residues 119–209 (DTEATTGSDT…SQQTSSHAGG (91 aa)) is disordered. Over residues 131–148 (KAATGATTSAGTGVTKTS) the composition is skewed to low complexity. Over residues 149-160 (ETGGVSSTANSE) the composition is skewed to polar residues. A compositionally biased stretch (low complexity) spans 161–208 (AKSGSVTTSKSGSTSISESKTTSGSSSSGKSSSSTSSASSQQTSSHAG). Ser197 carries the GPI-anchor amidated serine lipid modification. Positions 198–226 (ASSQQTSSHAGGASGAFVSLLGLFAALLI) are cleaved as a propeptide — removed in mature form.

Predicted to be a cleavage substrate for KEX2.

The protein localises to the cell membrane. Putative adhesin which is involved in cell adhesion and virulence. Plays a role in Candida-bacterial interactions and subsequent regulation of filamentation. The polypeptide is Probable GPI-anchored adhesin-like protein PGA28 (PGA28) (Candida albicans (strain SC5314 / ATCC MYA-2876) (Yeast)).